The chain runs to 87 residues: Small ribosomal subunit protein uS17 (87 aa).

The protein belongs to the universal ribosomal protein uS17 family. In terms of assembly, part of the 30S ribosomal subunit.

Functionally, one of the primary rRNA binding proteins, it binds specifically to the 5'-end of 16S ribosomal RNA. The protein is Small ribosomal subunit protein uS17 of Anoxybacillus flavithermus (strain DSM 21510 / WK1).